We begin with the raw amino-acid sequence, 244 residues long: 14-3-3 protein homolog 1 (244 aa).

Belongs to the 14-3-3 family.

This Echinococcus granulosus (Hydatid tapeworm) protein is 14-3-3 protein homolog 1.